The chain runs to 311 residues: Malate dehydrogenase (311 aa).

NAD(+) is bound by residues 7-13 and Asp34; that span reads GAAGGIG. Residues Arg81 and Arg87 each contribute to the substrate site. Residues Asn94 and 117–119 each bind NAD(+); that span reads ITN. Positions 119 and 153 each coordinate substrate. Residue His177 is the Proton acceptor of the active site. Met227 contacts NAD(+).

This sequence belongs to the LDH/MDH superfamily. MDH type 1 family. As to quaternary structure, homodimer.

It catalyses the reaction (S)-malate + NAD(+) = oxaloacetate + NADH + H(+). In terms of biological role, catalyzes the reversible oxidation of malate to oxaloacetate. The protein is Malate dehydrogenase of Shewanella pealeana (strain ATCC 700345 / ANG-SQ1).